A 366-amino-acid polypeptide reads, in one-letter code: UDP-N-acetylglucosamine--N-acetylmuramyl-(pentapeptide) pyrophosphoryl-undecaprenol N-acetylglucosamine transferase (366 aa).

UDP-N-acetyl-alpha-D-glucosamine contacts are provided by residues 15–17, Asn127, Arg175, Ser201, Ile255, and Gln300; that span reads TGG.

Belongs to the glycosyltransferase 28 family. MurG subfamily.

The protein localises to the cell inner membrane. The enzyme catalyses di-trans,octa-cis-undecaprenyl diphospho-N-acetyl-alpha-D-muramoyl-L-alanyl-D-glutamyl-meso-2,6-diaminopimeloyl-D-alanyl-D-alanine + UDP-N-acetyl-alpha-D-glucosamine = di-trans,octa-cis-undecaprenyl diphospho-[N-acetyl-alpha-D-glucosaminyl-(1-&gt;4)]-N-acetyl-alpha-D-muramoyl-L-alanyl-D-glutamyl-meso-2,6-diaminopimeloyl-D-alanyl-D-alanine + UDP + H(+). The protein operates within cell wall biogenesis; peptidoglycan biosynthesis. Functionally, cell wall formation. Catalyzes the transfer of a GlcNAc subunit on undecaprenyl-pyrophosphoryl-MurNAc-pentapeptide (lipid intermediate I) to form undecaprenyl-pyrophosphoryl-MurNAc-(pentapeptide)GlcNAc (lipid intermediate II). The polypeptide is UDP-N-acetylglucosamine--N-acetylmuramyl-(pentapeptide) pyrophosphoryl-undecaprenol N-acetylglucosamine transferase (Thiobacillus denitrificans (strain ATCC 25259 / T1)).